Here is a 443-residue protein sequence, read N- to C-terminus: MKKKYFGTDGIRGKVGASLITPEFTLKLGWAAGRVLAKSGSKKVLIGKDPRISGYMLEAALEAGLAAAGLRPVLMGPMPTPAVAYLTQTFRATAGIVISASHNPYYDNGIKFFSDQGTKLSEEIELEIEAEIDKELKCVDSSELGKAYRIEDAAGRYIEFCKSTFPSKYNLNGLKVVVDCANGATYHIAPLVISELGADVIAMGVEPDGLNINLNCGATSMQAISERVVKENADFGIAFDGDGDRVMMVDHTGYVLDGDELLYIIARDKLRSGTLKGGAVGTKMSNLGLEQSLKTLGIPFERSDVGDRHVMELMIKNNWCIGAENSGHIICSDHLSTGDGIVSGLQVISAMQSSRMKLYELRQGIKKYPQILLNLGFDNKIDPLQDNDVLAEAKRIETLLGDKGRVLLRKSGTEPVFRIMVEADESEKVVRGYAKSIADKVKV.

Catalysis depends on S101, which acts as the Phosphoserine intermediate. Residues S101, D240, D242, and D244 each contribute to the Mg(2+) site. S101 carries the post-translational modification Phosphoserine.

The protein belongs to the phosphohexose mutase family. The cofactor is Mg(2+). Post-translationally, activated by phosphorylation.

The catalysed reaction is alpha-D-glucosamine 1-phosphate = D-glucosamine 6-phosphate. Functionally, catalyzes the conversion of glucosamine-6-phosphate to glucosamine-1-phosphate. The chain is Phosphoglucosamine mutase from Psychromonas ingrahamii (strain DSM 17664 / CCUG 51855 / 37).